The chain runs to 136 residues: Piercer of microtubule wall 1 protein (136 aa).

The segment covering 1–16 (MSEEDPKACAEPEEPK) has biased composition (basic and acidic residues). The tract at residues 1–27 (MSEEDPKACAEPEEPKAGPPPEKTSDW) is disordered.

It belongs to the PIERCE1 family. In terms of assembly, microtubule inner protein component of sperm flagellar doublet microtubules. Interacts with CFAP53, ODAD1 and ODAD3; the interactions link the outer dynein arms docking complex (ODA-DC) to the internal microtubule inner proteins (MIP) in cilium axoneme. Expressed in trachea multiciliated cells.

It localises to the cytoplasm. It is found in the cytoskeleton. The protein localises to the cilium axoneme. The protein resides in the flagellum axoneme. Microtubule inner protein involved in the attachment of outer dynein arms (ODAs) to dynein-decorated doublet microtubules (DMTs) in cilia axoneme, which is required for motile cilia beating. Functions at the initial step of left-right asymmetry specification of the visceral organs. The sequence is that of Piercer of microtubule wall 1 protein (PIERCE1) from Bos taurus (Bovine).